Here is a 1005-residue protein sequence, read N- to C-terminus: Regulator of telomere elongation helicase 1 homolog (1005 aa).

The 316-residue stretch at 7–322 folds into the Helicase ATP-binding domain; that stretch reads AGIPVHFPFE…KEMLLELEKA (316 aa). 42–49 contacts ATP; it reads SPTGTGKT. [4Fe-4S] cluster is bound by residues Cys145, Cys163, Cys172, and Cys208. The DEAH box signature appears at 251-254; it reads DEAH. Residue Thr876 is modified to Phosphothreonine. Positions 893 to 917 are disordered; sequence NGPLKTEPSEPATTSSSFCPTPAQS.

Belongs to the helicase family. RAD3/XPD subfamily.

It is found in the nucleus. It catalyses the reaction ATP + H2O = ADP + phosphate + H(+). Functionally, a probable ATP-dependent DNA helicase implicated in DNA repair and the maintenance of genomic stability. Acts as an anti-recombinase to counteract toxic recombination and limit crossover during meiosis. Regulates meiotic recombination and crossover homeostasis by physically dissociating strand invasion events and thereby promotes noncrossover repair by meiotic synthesis dependent strand annealing (SDSA) as well as disassembly of D loop recombination intermediates. The sequence is that of Regulator of telomere elongation helicase 1 homolog from Drosophila virilis (Fruit fly).